We begin with the raw amino-acid sequence, 127 residues long: NHP2-like protein 1 homolog (127 aa).

It belongs to the eukaryotic ribosomal protein eL8 family.

The protein resides in the nucleus. It is found in the nucleolus. Functionally, binds to the 5'-stem-loop of U4 snRNA and may play a role in the late stage of spliceosome assembly. The protein undergoes a conformational change upon RNA-binding. In Drosophila melanogaster (Fruit fly), this protein is NHP2-like protein 1 homolog (hoip).